We begin with the raw amino-acid sequence, 150 residues long: Large ribosomal subunit protein uL13 (150 aa).

Residues 130–150 (EHPHAAQQPKTLQLDPAASAQ) are disordered.

Belongs to the universal ribosomal protein uL13 family. Part of the 50S ribosomal subunit.

In terms of biological role, this protein is one of the early assembly proteins of the 50S ribosomal subunit, although it is not seen to bind rRNA by itself. It is important during the early stages of 50S assembly. The chain is Large ribosomal subunit protein uL13 from Synechococcus sp. (strain CC9311).